A 142-amino-acid polypeptide reads, in one-letter code: Deoxyuridine 5'-triphosphate nucleotidohydrolase (142 aa).

Substrate contacts are provided by residues 62 to 64 (RSG), N75, 79 to 81 (TID), and K89.

The protein belongs to the dUTPase family. The cofactor is Mg(2+).

It carries out the reaction dUTP + H2O = dUMP + diphosphate + H(+). Its pathway is pyrimidine metabolism; dUMP biosynthesis; dUMP from dCTP (dUTP route): step 2/2. In terms of biological role, this enzyme is involved in nucleotide metabolism: it produces dUMP, the immediate precursor of thymidine nucleotides and it decreases the intracellular concentration of dUTP so that uracil cannot be incorporated into DNA. This chain is Deoxyuridine 5'-triphosphate nucleotidohydrolase, found in Nautilia profundicola (strain ATCC BAA-1463 / DSM 18972 / AmH).